The sequence spans 580 residues: V-type proton ATPase catalytic subunit A (580 aa).

ATP is bound at residue 209–216 (GAFGCGKT).

The protein belongs to the ATPase alpha/beta chains family. In terms of assembly, V-ATPase is a heteromultimeric enzyme composed of a peripheral catalytic V1 complex (main components: subunits A, B, C, D, E, and F) attached to an integral membrane V0 proton pore complex (main component: the proteolipid protein).

The catalysed reaction is ATP + H2O + 4 H(+)(in) = ADP + phosphate + 5 H(+)(out). Its function is as follows. Catalytic subunit of the peripheral V1 complex of vacuolar ATPase. V-ATPase vacuolar ATPase is responsible for acidifying a variety of intracellular compartments in eukaryotic cells. The chain is V-type proton ATPase catalytic subunit A from Hordeum vulgare (Barley).